The primary structure comprises 556 residues: Formate--tetrahydrofolate ligase (556 aa).

65 to 72 is an ATP binding site; it reads TPAGEGKS.

This sequence belongs to the formate--tetrahydrofolate ligase family.

It carries out the reaction (6S)-5,6,7,8-tetrahydrofolate + formate + ATP = (6R)-10-formyltetrahydrofolate + ADP + phosphate. Its pathway is one-carbon metabolism; tetrahydrofolate interconversion. This Enterococcus faecalis (strain ATCC 700802 / V583) protein is Formate--tetrahydrofolate ligase.